A 475-amino-acid chain; its full sequence is ISWI one complex protein 4 (475 aa).

At serine 2 the chain carries Phosphoserine. Threonine 9 is modified (phosphothreonine). 3 disordered regions span residues 42–84 (VSVH…DFGE), 181–296 (EEEY…IKYH), and 454–475 (EMDR…KVGA). Phosphoserine occurs at positions 65 and 73. Acidic residues-rich tracts occupy residues 72–84 (QSEE…DFGE), 181–193 (EEEY…EENE), and 241–252 (ASEEEEEEEEEK). Serine 242 is modified (phosphoserine). Residues 259–294 (KRPQRTKTKKVVVSKTKPNPKTKAKKEKPKPPKPIK) are compositionally biased toward basic residues. Basic and acidic residues predominate over residues 456–475 (DREKPSFSEDVKEEESKVGA).

In terms of assembly, component of the ISW1B complex, which at least consists of ISW1, IOC2 and IOC4.

The protein resides in the nucleus. Its function is as follows. Functions as a component of the ISW1B complex, which acts in remodeling the chromatin by catalyzing an ATP-dependent alteration in the structure of nucleosomal DNA. The ISW1B complex acts within coding regions to control the amount of RNA polymerase II released into productive elongation and to coordinate elongation with termination and pre-mRNA processing. The protein is ISWI one complex protein 4 (IOC4) of Saccharomyces cerevisiae (strain ATCC 204508 / S288c) (Baker's yeast).